Here is a 351-residue protein sequence, read N- to C-terminus: Phosphoribosylformylglycinamidine cyclo-ligase (351 aa).

Belongs to the AIR synthase family.

It localises to the cytoplasm. The catalysed reaction is 2-formamido-N(1)-(5-O-phospho-beta-D-ribosyl)acetamidine + ATP = 5-amino-1-(5-phospho-beta-D-ribosyl)imidazole + ADP + phosphate + H(+). Its pathway is purine metabolism; IMP biosynthesis via de novo pathway; 5-amino-1-(5-phospho-D-ribosyl)imidazole from N(2)-formyl-N(1)-(5-phospho-D-ribosyl)glycinamide: step 2/2. This is Phosphoribosylformylglycinamidine cyclo-ligase from Burkholderia cenocepacia (strain HI2424).